Here is a 174-residue protein sequence, read N- to C-terminus: RNA pyrophosphohydrolase (174 aa).

Residues 6–149 (GFRANVGIII…KRDVYRKVMK (144 aa)) form the Nudix hydrolase domain. Residues 38 to 59 (GGVDDGETAEEAMYRELYEEVG) carry the Nudix box motif.

This sequence belongs to the Nudix hydrolase family. RppH subfamily. It depends on a divalent metal cation as a cofactor.

Accelerates the degradation of transcripts by removing pyrophosphate from the 5'-end of triphosphorylated RNA, leading to a more labile monophosphorylated state that can stimulate subsequent ribonuclease cleavage. This is RNA pyrophosphohydrolase from Shewanella sp. (strain MR-7).